A 428-amino-acid chain; its full sequence is Protein Wnt-8b (428 aa).

The signal sequence occupies residues 1–22; the sequence is MFYTGSFWFIFFILPAIPFCHS. Cys54 and Cys65 are joined by a disulfide. Asn123 and Asn176 each carry an N-linked (GlcNAc...) asparagine glycan. 10 cysteine pairs are disulfide-bonded: Cys177–Cys185, Cys187–Cys205, Cys253–Cys267, Cys255–Cys262, Cys329–Cys367, Cys345–Cys360, Cys364–Cys406, Cys382–Cys397, Cys384–Cys394, and Cys389–Cys390. A lipid anchor (O-palmitoleoyl serine) is attached at Ser259. Asn332 carries an N-linked (GlcNAc...) asparagine glycan.

Belongs to the Wnt family. Palmitoleoylation is required for efficient binding to frizzled receptors. Depalmitoleoylation leads to Wnt signaling pathway inhibition. In terms of processing, proteolytic processing by tiki1 and tiki2 promotes oxidation and formation of large disulfide-bond oligomers, leading to inactivation of wnt8b. As to expression, in adults, in brain.

Its subcellular location is the secreted. The protein localises to the extracellular space. The protein resides in the extracellular matrix. Its function is as follows. Ligand for members of the frizzled family of seven transmembrane receptors. Plays a role in the initiation of dorsal axis development. May activate a Nieuwkoop center-like signaling pathway. The protein is Protein Wnt-8b (wnt8b) of Xenopus laevis (African clawed frog).